We begin with the raw amino-acid sequence, 930 residues long: Vacuolar membrane protease (930 aa).

The interval 1–28 (MPQEEVHDTSSVSDDNLTNTGGGGSNYY) is disordered. The Cytoplasmic portion of the chain corresponds to 1–49 (MPQEEVHDTSSVSDDNLTNTGGGGSNYYNSHNQPNVFVRAIRSIFGYRK). The helical transmembrane segment at 50–70 (TSLTLFVILTIIFTIALSLYD) threads the bilayer. Residues 71-379 (NNLDLTIELP…YFFSSPISAL (309 aa)) lie on the Vacuolar side of the membrane. Asparagine 163 carries an N-linked (GlcNAc...) asparagine glycan. Histidine 177 and aspartate 189 together coordinate Zn(2+). Residue glutamate 222 is the Proton acceptor of the active site. Residues glutamate 223, glutamate 248, and histidine 320 each contribute to the Zn(2+) site. A glycan (N-linked (GlcNAc...) asparagine) is linked at asparagine 354. The chain crosses the membrane as a helical span at residues 380-400 (VTINSVLIVLFPILSGPLLFI). The Cytoplasmic portion of the chain corresponds to 401-411 (TVRYKKWKIGT). A helical transmembrane segment spans residues 412-432 (SNFLSLPLAIVLTVAIVMIVV). Residues 433 to 449 (NQGFQIANPFLPSSHPL) lie on the Vacuolar side of the membrane. Residues 450-470 (LLVATTTSISLLIYYVFLNGV) traverse the membrane as a helical segment. Topologically, residues 471 to 480 (NWVSPSGDQK) are cytoplasmic. A helical membrane pass occupies residues 481 to 501 (LITIIEISFIYWLILIYVTHG). Residues 502-514 (LSQNKIGDDHTGE) are Vacuolar-facing. Residues 515 to 535 (FPFTVLFFLEATASLFGLIGW) traverse the membrane as a helical segment. Over 536-598 (TFSRSIKQSS…FGYDWSLQYL (63 aa)) the chain is Cytoplasmic. The segment at 542–570 (KQSSNDGSDEPLLTGTAERYGSDDTDEDE) is disordered. Residues 599–619 (LIVPISSLIIFNSGWLVLDGI) form a helical membrane-spanning segment. An N-linked (GlcNAc...) asparagine glycan is attached at asparagine 620. The Vacuolar segment spans residues 620-631 (NKSIQESFAAEN). The helical transmembrane segment at 632 to 652 (LIYLLIQLFSQFWILPILPFV) threads the bilayer. The Cytoplasmic segment spans residues 653–657 (YKLNR). Residues 658-678 (FIVFGLTIFAISGVALISFLD) traverse the membrane as a helical segment. The Vacuolar segment spans residues 679 to 930 (PFNQENPLKL…LVSVSLKIEV (252 aa)). Asparagine 697, asparagine 768, asparagine 808, and asparagine 890 each carry an N-linked (GlcNAc...) asparagine glycan.

It belongs to the peptidase M28 family. It depends on Zn(2+) as a cofactor.

The protein localises to the vacuole membrane. Its function is as follows. May be involved in vacuolar sorting and osmoregulation. This chain is Vacuolar membrane protease, found in Candida dubliniensis (strain CD36 / ATCC MYA-646 / CBS 7987 / NCPF 3949 / NRRL Y-17841) (Yeast).